A 554-amino-acid polypeptide reads, in one-letter code: 3-(3-hydroxy-phenyl)propionate/3-hydroxycinnamic acid hydroxylase (554 aa).

Residues 17 to 46 (QVAI…VVEK) and 285 to 295 (FRIDRVLLAGD) each bind FAD.

The protein belongs to the PheA/TfdB FAD monooxygenase family. The cofactor is FAD.

It carries out the reaction 3-(3-hydroxyphenyl)propanoate + NADH + O2 + H(+) = 3-(2,3-dihydroxyphenyl)propanoate + NAD(+) + H2O. The catalysed reaction is (2E)-3-(3-hydroxyphenyl)prop-2-enoate + NADH + O2 + H(+) = (2E)-3-(2,3-dihydroxyphenyl)prop-2-enoate + NAD(+) + H2O. The protein operates within aromatic compound metabolism; 3-phenylpropanoate degradation. Its function is as follows. Catalyzes the insertion of one atom of molecular oxygen into position 2 of the phenyl ring of 3-(3-hydroxyphenyl)propionate (3-HPP) and hydroxycinnamic acid (3HCI). This is 3-(3-hydroxy-phenyl)propionate/3-hydroxycinnamic acid hydroxylase from Escherichia coli O157:H7.